The sequence spans 904 residues: Translation initiation factor IF-2 (904 aa).

3 disordered regions span residues 102-122, 134-252, and 267-316; these read TYVK…PDEE, RQRN…MVAG, and HLSA…ERPT. Basic and acidic residues predominate over residues 134–177; it reads RQRNLEEQQRLAESDRVRDEAIQRKREEEQAAKDRAEAERKAAE. Low complexity predominate over residues 178 to 230; the sequence is EAAAAASAPAPVADAPKPSAAAPAARLPSSPSSAPRAARPAGASPASRPAAPA. One can recognise a tr-type G domain in the interval 403–572; it reads SRPPVVTIMG…SLQAEVLELK (170 aa). A G1 region spans residues 412 to 419; the sequence is GHVDHGKT. 412–419 contributes to the GTP binding site; it reads GHVDHGKT. The segment at 437–441 is G2; that stretch reads GITQH. The tract at residues 458 to 461 is G3; sequence DTPG. Residues 458–462 and 512–515 each bind GTP; these read DTPGH and NKID. Positions 512–515 are G4; sequence NKID. Residues 548–550 form a G5 region; the sequence is SAK.

It belongs to the TRAFAC class translation factor GTPase superfamily. Classic translation factor GTPase family. IF-2 subfamily.

It localises to the cytoplasm. Functionally, one of the essential components for the initiation of protein synthesis. Protects formylmethionyl-tRNA from spontaneous hydrolysis and promotes its binding to the 30S ribosomal subunits. Also involved in the hydrolysis of GTP during the formation of the 70S ribosomal complex. This chain is Translation initiation factor IF-2, found in Xanthomonas axonopodis pv. citri (strain 306).